A 194-amino-acid polypeptide reads, in one-letter code: 22 kDa relaxation protein (194 aa).

This protein is probably required for relaxation complex formation. The polypeptide is 22 kDa relaxation protein (Salmonella typhimurium).